A 940-amino-acid chain; its full sequence is Protein translocase subunit SecA (940 aa).

ATP-binding positions include Gln85, 103-107 (GEGKT), and Asp505. The segment at 851–940 (PVQDGAERPS…KGGGGRRRKK (90 aa)) is disordered. A compositionally biased stretch (basic and acidic residues) spans 855 to 865 (GAERPSLEKEG). The segment covering 928–940 (RRRKGGGGRRRKK) has biased composition (basic residues).

Belongs to the SecA family. As to quaternary structure, monomer and homodimer. Part of the essential Sec protein translocation apparatus which comprises SecA, SecYEG and auxiliary proteins SecDF. Other proteins may also be involved.

It is found in the cell membrane. The protein resides in the cytoplasm. The enzyme catalyses ATP + H2O + cellular proteinSide 1 = ADP + phosphate + cellular proteinSide 2.. In terms of biological role, part of the Sec protein translocase complex. Interacts with the SecYEG preprotein conducting channel. Has a central role in coupling the hydrolysis of ATP to the transfer of proteins into and across the cell membrane, serving as an ATP-driven molecular motor driving the stepwise translocation of polypeptide chains across the membrane. This is Protein translocase subunit SecA from Streptomyces griseus.